Consider the following 1152-residue polypeptide: Integrin alpha-M (1152 aa).

The signal sequence occupies residues 1–16 (MALRVLLLTALTLCHG). Residues 17–1104 (FNLDTENAMT…TKVEPFEVPN (1088 aa)) are Extracellular-facing. 2 FG-GAP repeats span residues 18–75 (NLDT…SCEP) and 76–135 (IRLQ…QQPQ). Residues cysteine 66 and cysteine 73 are joined by a disulfide bond. Residue asparagine 86 is glycosylated (N-linked (GlcNAc...) asparagine). An intrachain disulfide couples cysteine 105 to cysteine 123. One can recognise a VWFA domain in the interval 150–328 (DIAFLIDGSG…EALKTIQNQL (179 aa)). A glycan (N-linked (GlcNAc...) asparagine) is linked at asparagine 240. FG-GAP repeat units follow at residues 339–390 (QTGS…STFI), 391–442 (NMTR…TGMW), 443–503 (ESNA…RARW), 506–564 (DAVL…SGIS), and 569–629 (QRIA…FNPR). Asparagine 391 is a glycosylation site (N-linked (GlcNAc...) asparagine). Positions 465, 467, 469, 473, 529, 531, 533, 537, 592, 596, and 600 each coordinate Ca(2+). A glycan (N-linked (GlcNAc...) asparagine) is linked at asparagine 469. Cysteine 654 and cysteine 711 are oxidised to a cystine. 3 N-linked (GlcNAc...) asparagine glycosylation sites follow: asparagine 692, asparagine 696, and asparagine 734. Cysteine 770 and cysteine 776 form a disulfide bridge. Residue asparagine 801 is glycosylated (N-linked (GlcNAc...) asparagine). Cysteine 847 and cysteine 864 are joined by a disulfide. 8 N-linked (GlcNAc...) asparagine glycosylation sites follow: asparagine 880, asparagine 900, asparagine 911, asparagine 940, asparagine 946, asparagine 978, asparagine 993, and asparagine 1021. Disulfide bonds link cysteine 998-cysteine 1022 and cysteine 1027-cysteine 1032. Asparagine 1044, asparagine 1050, and asparagine 1075 each carry an N-linked (GlcNAc...) asparagine glycan. A helical membrane pass occupies residues 1105–1128 (PLPLIVGSSVGGLLLLALITAALY). Over 1129–1152 (KLGFFKRQYKDMMSEGGPPGAEPQ) the chain is Cytoplasmic. The GFFKR motif signature appears at 1131 to 1135 (GFFKR).

It belongs to the integrin alpha chain family. Heterodimer of an alpha and a beta subunit. ITGAM associates with ITGB2. Found in a complex with CD177 and ITGB2/CD18. Interacts with JAM3. Interacts with THBD. Interacts with complement factor H/CFH; this interaction mediates adhesion of neutrophils to pathogens leading to pathogen clearance. Interacts with TMEM268; this interaction inhibits ITGAM degradation via the endosome-lysosome pathway. As to expression, predominantly expressed in monocytes and granulocytes. Expressed in neutrophils (at protein level).

The protein resides in the cell membrane. It is found in the membrane raft. Integrin ITGAM/ITGB2 is implicated in various adhesive interactions of monocytes, macrophages and granulocytes as well as in mediating the uptake of complement-coated particles and pathogens. It is identical with CR-3, the receptor for the iC3b fragment of the third complement component. It probably recognizes the R-G-D peptide in C3b. Integrin ITGAM/ITGB2 is also a receptor for fibrinogen, factor X and ICAM1. It recognizes P1 and P2 peptides of fibrinogen gamma chain. Regulates neutrophil migration. In association with beta subunit ITGB2/CD18, required for CD177-PRTN3-mediated activation of TNF primed neutrophils. May regulate phagocytosis-induced apoptosis in extravasated neutrophils. May play a role in mast cell development. Required with TYROBP/DAP12 in microglia to control production of microglial superoxide ions which promote the neuronal apoptosis that occurs during brain development. The sequence is that of Integrin alpha-M (ITGAM) from Homo sapiens (Human).